Here is a 114-residue protein sequence, read N- to C-terminus: UPF0060 membrane protein GDI3492/Gdia_2889 (114 aa).

The next 4 membrane-spanning stretches (helical) occupy residues 8-28 (FAVY…WWCW), 35-55 (AWVL…LTLV), 64-84 (FAAY…LVEG), and 92-112 (AAGV…GRGA).

It belongs to the UPF0060 family.

It localises to the cell inner membrane. The sequence is that of UPF0060 membrane protein GDI3492/Gdia_2889 from Gluconacetobacter diazotrophicus (strain ATCC 49037 / DSM 5601 / CCUG 37298 / CIP 103539 / LMG 7603 / PAl5).